The following is a 182-amino-acid chain: Ribulose bisphosphate carboxylase small subunit, chloroplastic (182 aa).

The transit peptide at 1–58 (MASSMISSATIATVNCSSPAQANMVAPFTGLKSASAFPVTRKANNDITSLASNGGRVQ) directs the protein to the chloroplast.

The protein belongs to the RuBisCO small chain family. Heterohexadecamer of 8 large and 8 small subunits.

The protein localises to the plastid. It is found in the chloroplast. RuBisCO catalyzes two reactions: the carboxylation of D-ribulose 1,5-bisphosphate, the primary event in carbon dioxide fixation, as well as the oxidative fragmentation of the pentose substrate. Both reactions occur simultaneously and in competition at the same active site. Although the small subunit is not catalytic it is essential for maximal activity. The protein is Ribulose bisphosphate carboxylase small subunit, chloroplastic of Gossypium hirsutum (Upland cotton).